We begin with the raw amino-acid sequence, 749 residues long: Patatin-like phospholipase domain-containing protein An01g04180 (749 aa).

Residues 1-21 form a disordered region; the sequence is MNGAEKSAAGDTYDPSTIPDY. Residues 87 to 107 form a helical membrane-spanning segment; it reads WPFLFTVFGWITALAFAYTLT. The region spanning 277–468 is the PNPLA domain; it reads LCLSGGATFA…RTDIPIKALN (192 aa). The short motif at 308 to 312 is the GXSXG element; that stretch reads GTSGG. The active-site Nucleophile is Ser-310. Asp-455 serves as the catalytic Proton acceptor. The segment at 619–726 is disordered; the sequence is AGGRPISPAP…STGSSIFEEV (108 aa). The span at 649 to 664 shows a compositional bias: basic and acidic residues; it reads PLNERLDHNLPERRGD. Residues 685–707 show a composition bias toward low complexity; the sequence is SLSENSSNESAARPSSSSSSSRL.

The protein belongs to the PLPL family.

It is found in the membrane. Its function is as follows. Probable lipid hydrolase. The protein is Patatin-like phospholipase domain-containing protein An01g04180 of Aspergillus niger (strain ATCC MYA-4892 / CBS 513.88 / FGSC A1513).